The sequence spans 78 residues: Acyl carrier protein (78 aa).

One can recognise a Carrier domain in the interval 2-77 (SDILERVRKI…DAVKFITEKT (76 aa)). S37 carries the O-(pantetheine 4'-phosphoryl)serine modification.

This sequence belongs to the acyl carrier protein (ACP) family. 4'-phosphopantetheine is transferred from CoA to a specific serine of apo-ACP by AcpS. This modification is essential for activity because fatty acids are bound in thioester linkage to the sulfhydryl of the prosthetic group.

It localises to the cytoplasm. Its pathway is lipid metabolism; fatty acid biosynthesis. In terms of biological role, carrier of the growing fatty acid chain in fatty acid biosynthesis. This chain is Acyl carrier protein, found in Caulobacter vibrioides (strain ATCC 19089 / CIP 103742 / CB 15) (Caulobacter crescentus).